We begin with the raw amino-acid sequence, 221 residues long: Large ribosomal subunit protein uL4 (221 aa).

The tract at residues 47-77 is disordered; sequence GTASTKTRGEVSGGGRKPWIQKHTGRARQGS.

Belongs to the universal ribosomal protein uL4 family. In terms of assembly, part of the 50S ribosomal subunit.

One of the primary rRNA binding proteins, this protein initially binds near the 5'-end of the 23S rRNA. It is important during the early stages of 50S assembly. It makes multiple contacts with different domains of the 23S rRNA in the assembled 50S subunit and ribosome. Its function is as follows. Forms part of the polypeptide exit tunnel. This chain is Large ribosomal subunit protein uL4, found in Thermosipho melanesiensis (strain DSM 12029 / CIP 104789 / BI429).